Consider the following 156-residue polypeptide: Small ribosomal subunit protein uS7 (156 aa).

The protein belongs to the universal ribosomal protein uS7 family. Part of the 30S ribosomal subunit. Contacts proteins S9 and S11.

Functionally, one of the primary rRNA binding proteins, it binds directly to 16S rRNA where it nucleates assembly of the head domain of the 30S subunit. Is located at the subunit interface close to the decoding center, probably blocks exit of the E-site tRNA. In Alkaliphilus metalliredigens (strain QYMF), this protein is Small ribosomal subunit protein uS7.